A 298-amino-acid polypeptide reads, in one-letter code: Ribosomal protein L11 methyltransferase (298 aa).

Residues Thr152, Gly173, Asp195, and Asn234 each coordinate S-adenosyl-L-methionine.

It belongs to the methyltransferase superfamily. PrmA family.

Its subcellular location is the cytoplasm. It carries out the reaction L-lysyl-[protein] + 3 S-adenosyl-L-methionine = N(6),N(6),N(6)-trimethyl-L-lysyl-[protein] + 3 S-adenosyl-L-homocysteine + 3 H(+). Methylates ribosomal protein L11. The polypeptide is Ribosomal protein L11 methyltransferase (Ralstonia pickettii (strain 12J)).